The sequence spans 460 residues: tRNA (guanine(37)-N(1))-methyltransferase (460 aa).

S-adenosyl-L-methionine-binding positions include His-204, 243 to 244 (DL), 271 to 272 (DA), and Asn-292. Residues 390–428 (ASTTTTPTTSNTNTSTTTSTTSTSTTTTESTNTNNSANN) show a composition bias toward low complexity. Positions 390–460 (ASTTTTPTTS…SIDTNKKLKN (71 aa)) are disordered. Residues 442 to 451 (DSNETNETDS) show a composition bias toward acidic residues.

This sequence belongs to the class I-like SAM-binding methyltransferase superfamily. TRM5/TYW2 family. Monomer.

Its subcellular location is the mitochondrion matrix. The protein localises to the nucleus. It is found in the cytoplasm. It catalyses the reaction guanosine(37) in tRNA + S-adenosyl-L-methionine = N(1)-methylguanosine(37) in tRNA + S-adenosyl-L-homocysteine + H(+). In terms of biological role, specifically methylates the N1 position of guanosine-37 in various cytoplasmic and mitochondrial tRNAs. Methylation is not dependent on the nature of the nucleoside 5' of the target nucleoside. This is the first step in the biosynthesis of wybutosine (yW), a modified base adjacent to the anticodon of tRNAs and required for accurate decoding. This is tRNA (guanine(37)-N(1))-methyltransferase (trmt5) from Dictyostelium discoideum (Social amoeba).